Consider the following 236-residue polypeptide: 1-(5-phosphoribosyl)-5-[(5-phosphoribosylamino)methylideneamino] imidazole-4-carboxamide isomerase (236 aa).

The Proton acceptor role is filled by D8. D127 serves as the catalytic Proton donor.

This sequence belongs to the HisA/HisF family.

Its subcellular location is the cytoplasm. The catalysed reaction is 1-(5-phospho-beta-D-ribosyl)-5-[(5-phospho-beta-D-ribosylamino)methylideneamino]imidazole-4-carboxamide = 5-[(5-phospho-1-deoxy-D-ribulos-1-ylimino)methylamino]-1-(5-phospho-beta-D-ribosyl)imidazole-4-carboxamide. It participates in amino-acid biosynthesis; L-histidine biosynthesis; L-histidine from 5-phospho-alpha-D-ribose 1-diphosphate: step 4/9. The chain is 1-(5-phosphoribosyl)-5-[(5-phosphoribosylamino)methylideneamino] imidazole-4-carboxamide isomerase from Campylobacter concisus (strain 13826).